Reading from the N-terminus, the 317-residue chain is Beta-ketoacyl-[acyl-carrier-protein] synthase III (317 aa).

Catalysis depends on residues Cys112 and His244. The segment at 245–249 (QANLR) is ACP-binding. Asn274 is an active-site residue.

The protein belongs to the thiolase-like superfamily. FabH family. As to quaternary structure, homodimer.

Its subcellular location is the cytoplasm. The catalysed reaction is malonyl-[ACP] + acetyl-CoA + H(+) = 3-oxobutanoyl-[ACP] + CO2 + CoA. Its pathway is lipid metabolism; fatty acid biosynthesis. Functionally, catalyzes the condensation reaction of fatty acid synthesis by the addition to an acyl acceptor of two carbons from malonyl-ACP. Catalyzes the first condensation reaction which initiates fatty acid synthesis and may therefore play a role in governing the total rate of fatty acid production. Possesses both acetoacetyl-ACP synthase and acetyl transacylase activities. Its substrate specificity determines the biosynthesis of branched-chain and/or straight-chain of fatty acids. The protein is Beta-ketoacyl-[acyl-carrier-protein] synthase III of Blochmanniella pennsylvanica (strain BPEN).